The sequence spans 97 residues: U-scoloptoxin(10)-Sa2a (97 aa).

Positions M1–A23 are cleaved as a signal peptide.

This sequence belongs to the scoloptoxin-10 family. Contains 3 disulfide bonds. As to expression, expressed by the venom gland.

It is found in the secreted. This is U-scoloptoxin(10)-Sa2a from Scolopendra alternans (Florida Keys giant centipede).